The primary structure comprises 151 residues: F-box protein GID2 (151 aa).

Residues 1-25 (MKRSTTDSDLAGDAHNETNKKMKST) are compositionally biased toward basic and acidic residues. Residues 1–27 (MKRSTTDSDLAGDAHNETNKKMKSTEE) are disordered. An F-box domain is found at 29-75 (EIGFSNLDENLVYEVLKHVDAKTLAMSSCVSKIWHKTAQDERLWELI).

As to quaternary structure, part of some SCF(GID2) complex, which consist of SKP1B, CUL1 cullin, GID2/SLY1 and some RING box protein. Interacts directly with SKP1A and SKP1B. Interacts directly with DELLA proteins GAI, RGA, RGL1, RGL3 and probably RGL2. May have a higher affinity for phosphorylated DELLA proteins. Expressed in all tissues tested, including rosette leaves, green siliques, flowers, stems, cauline leaves and seedlings.

It is found in the nucleus. The protein operates within protein modification; protein ubiquitination. Its function is as follows. Essential component of the SCF-type E3 ligase complex, SCF(GID2), a complex that positively regulates the gibberellin signaling pathway. Upon gibberellin treatment, the SCF(GID2) complex mediates the ubiquitination and subsequent degradation of DELLA proteins (GAI, RGA and RGL2), some repressors of the gibberellin pathway, leading to activate the pathway. This Arabidopsis thaliana (Mouse-ear cress) protein is F-box protein GID2 (GID2).